The chain runs to 254 residues: Thiamine thiazole synthase (254 aa).

NAD(+)-binding positions include Ser36, 55 to 56 (EK), Gly63, Val127, and 154 to 156 (HVD). Residues Asp156 and His171 each coordinate Fe cation. Met219 is an NAD(+) binding site. Arg229 provides a ligand contact to glycine.

It belongs to the THI4 family. In terms of assembly, homooctamer; tetramer of dimers. Requires Fe(2+) as cofactor.

It catalyses the reaction hydrogen sulfide + glycine + NAD(+) = ADP-5-ethyl-4-methylthiazole-2-carboxylate + nicotinamide + 3 H2O + H(+). The protein operates within cofactor biosynthesis; thiamine diphosphate biosynthesis. In terms of biological role, involved in the biosynthesis of the thiazole moiety of thiamine. Catalyzes the conversion of NAD and glycine to adenosine diphosphate 5-(2-hydroxyethyl)-4-methylthiazole-2-carboxylate (ADT), an adenylated thiazole intermediate, using free sulfide as a source of sulfur. The chain is Thiamine thiazole synthase from Methanoculleus marisnigri (strain ATCC 35101 / DSM 1498 / JR1).